The primary structure comprises 306 residues: Arylesterase (306 aa).

Residues 82–84 (HGG) carry the Involved in the stabilization of the negatively charged intermediate by the formation of the oxyanion hole motif. Catalysis depends on residues Ser-156, Asp-251, and His-281.

As to quaternary structure, monomer.

It carries out the reaction a phenyl acetate + H2O = a phenol + acetate + H(+). It catalyses the reaction An aryl dialkyl phosphate + H2O = dialkyl phosphate + an aryl alcohol.. With respect to regulation, completely inhibited by chemical modifiers that are specific to Cys (HgCl(2) and p-chloromercuribenzoic acid), His (diethyl pyrocarbonate) and Ser (diisopropyl fluorophosphate and phenylmethanesulfonyl fluoride). No significant effect with chemical modifiers specific to Lys (pyridoxal 5'-phosphate) and Arg (phenylglyoxal). Not inhibited by inhibitors of A-esterases (paraoxon) or C-esterases (physostigmine/eserine). Activity is also not effected by incubation with 5 mM divalent cations for 30 minutes at 30 degrees Celsius or with 10 mM EDTA for 60 minutes at 75 degrees Celsius. Functionally, has a broad substrate specificity. Hydrolyzes various p-nitrophenyl phosphates, aromatic esters and p-nitrophenyl fatty acids in vitro. Most active against paraoxon, phenyl acetate and p-nitrophenyl caproate (C6), respectively. Also has tributyrinase activity, but shows no hydrolytic activity toward other triacylglycerols including tricaprylin, trimyristin, tripalmitin or triolein in vitro. The chain is Arylesterase from Saccharolobus solfataricus (Sulfolobus solfataricus).